The chain runs to 1129 residues: ISWI chromatin-remodeling complex ATPase ISW1 (1129 aa).

Positions 144–177 (KANGKGKGKHQDVRRRKTEHEEDAELLKEEDSDD) are disordered. The span at 147–160 (GKGKGKHQDVRRRK) shows a compositional bias: basic residues. A compositionally biased stretch (acidic residues) spans 164–177 (EEDAELLKEEDSDD). The Helicase ATP-binding domain maps to 208–373 (VSLHKNKIAG…WALLNFLLPD (166 aa)). An ATP-binding site is contributed by 221–228 (DEMGLGKT). Residues 324-327 (DEAH) carry the DEAH box motif. Positions 506 to 657 (VLDKLLKKLK…QLVIQQNRTS (152 aa)) constitute a Helicase C-terminal domain. Residues 683-705 (FKSGTSTGSAGTPEPGSGEKGDD) are disordered. The residue at position 694 (T694) is a Phosphothreonine. Phosphoserine is present on S846. SANT domains lie at 882 to 935 (EGFT…SNIE) and 988 to 1052 (NKRT…LLQC). Residues 1073 to 1108 (KEDENGKRIREEFADQTANEKENVDGVESKKAKIED) are compositionally biased toward basic and acidic residues. A disordered region spans residues 1073-1129 (KEDENGKRIREEFADQTANEKENVDGVESKKAKIEDTSNVGTEQLVAEKIPENETTH).

This sequence belongs to the SNF2/RAD54 helicase family. ISWI subfamily. As to quaternary structure, component of the ISW1A complex, which at least consists of ISW1 and IOC3. Component of the ISW1B complex, which at least consists of ISW1, IOC2 and IOC4.

It localises to the nucleus. Its function is as follows. Catalytic component of ISW1-type complexes, which act by remodeling the chromatin by catalyzing an ATP-dependent alteration in the structure of nucleosomal DNA. They are involved in coordinating transcriptional repression, activation and elongation phases. The ISW1A complex represses gene expression at initiation through specific positioning of a promoter proximal dinucleosome. The ISW1B complex acts within coding regions to control the amount of RNA polymerase II released into productive elongation and to coordinate elongation with termination and pre-mRNA processing. This is ISWI chromatin-remodeling complex ATPase ISW1 (ISW1) from Saccharomyces cerevisiae (strain ATCC 204508 / S288c) (Baker's yeast).